The sequence spans 317 residues: Nitrilase (317 aa).

The region spanning 5–280 is the CN hydrolase domain; it reads VKVAVVQAEP…DGVIISELDM (276 aa). The active-site Proton acceptor is glutamate 45. Lysine 125 is a catalytic residue. The active-site Nucleophile is cysteine 165.

Belongs to the carbon-nitrogen hydrolase superfamily. Nitrilase family.

The enzyme catalyses a nitrile + 2 H2O = a carboxylate + NH4(+). Functionally, nitrilase that hydrolyzes preferentially 4-cyanopyridine. Is also able to hydrolyze some aliphatic nitriles, such as phenylacetonitrile. The chain is Nitrilase from Meyerozyma guilliermondii (strain ATCC 6260 / CBS 566 / DSM 6381 / JCM 1539 / NBRC 10279 / NRRL Y-324) (Yeast).